The sequence spans 267 residues: MQEFTNPFPIDSSSLIHCMTNEISCEMLANGILALGCKPVMADDPREVLDFTKQSQALFINLGHLSAEKEKAIRIAASYAAQVCLPMVVDAVGVTTSSIRKSLVKDLLDYRPTVLKGNMSEIRSLVGLKHHGVGVDASAKDQETEDLLQVLKDWCQTYPGMSFLVTGPKDLIVSENQVAVLENGCTELDWITGTGDLVGALTAVFLSQGKTGFEASCLAVSYLNIAAEKIVVQGMGLEEFRYQVLNQLSLLRRDENWLDTIKGEAYE.

Substrate is bound at residue Met-41. Positions 116 and 166 each coordinate ATP. Gly-193 provides a ligand contact to substrate.

Belongs to the Thz kinase family. Mg(2+) serves as cofactor.

The enzyme catalyses 5-(2-hydroxyethyl)-4-methylthiazole + ATP = 4-methyl-5-(2-phosphooxyethyl)-thiazole + ADP + H(+). The protein operates within cofactor biosynthesis; thiamine diphosphate biosynthesis; 4-methyl-5-(2-phosphoethyl)-thiazole from 5-(2-hydroxyethyl)-4-methylthiazole: step 1/1. Catalyzes the phosphorylation of the hydroxyl group of 4-methyl-5-beta-hydroxyethylthiazole (THZ). This chain is Hydroxyethylthiazole kinase 2, found in Streptococcus pneumoniae (strain Taiwan19F-14).